The following is a 267-amino-acid chain: Undecaprenyl-diphosphatase (267 aa).

8 helical membrane-spanning segments follow: residues 1–21 (MSYFEAFILALIQGLTEFLPI), 39–59 (QGLAFDVAVHVGTLMAVVIYF), 83–103 (AKLAWMIVIATIPACVFGLLM), 111–131 (LRSAYVIATTTIIFGLLLWWV), 144–164 (TGWKKALFIGIAQALAMIPGT), 189–209 (FLMSIPIITLAGGYLGMKLVT), 218–238 (FLLTGIVTSFISAYICIHFFL), and 246–266 (MTPFVIYRLILGFGLFAFLLM).

It belongs to the UppP family.

It localises to the cell inner membrane. It catalyses the reaction di-trans,octa-cis-undecaprenyl diphosphate + H2O = di-trans,octa-cis-undecaprenyl phosphate + phosphate + H(+). Its function is as follows. Catalyzes the dephosphorylation of undecaprenyl diphosphate (UPP). Confers resistance to bacitracin. The chain is Undecaprenyl-diphosphatase from Vibrio campbellii (strain ATCC BAA-1116).